The following is a 523-amino-acid chain: UvrABC system protein C (523 aa).

The GIY-YIG domain maps to His-15–Ile-93. In terms of domain architecture, UVR spans Arg-197–Leu-232.

Belongs to the UvrC family. As to quaternary structure, interacts with UvrB in an incision complex.

It is found in the cytoplasm. In terms of biological role, the UvrABC repair system catalyzes the recognition and processing of DNA lesions. UvrC both incises the 5' and 3' sides of the lesion. The N-terminal half is responsible for the 3' incision and the C-terminal half is responsible for the 5' incision. The sequence is that of UvrABC system protein C from Methanosarcina mazei (strain ATCC BAA-159 / DSM 3647 / Goe1 / Go1 / JCM 11833 / OCM 88) (Methanosarcina frisia).